The sequence spans 447 residues: Zinc finger protein ZIC 1 (447 aa).

A C2H2-type 1; atypical zinc finger spans residues 225-260; that stretch reads LICKWIEPEQLANPKKSCNKTFSTMHELVTHVTVEH. The segment at 269–296 adopts a C2H2-type 2; atypical zinc-finger fold; the sequence is HICFWEECPREGKPFKAKYKLVNHIRVH. 3 C2H2-type zinc fingers span residues 302-326, 332-356, and 362-384; these read FPCP…KRTH, FKCE…MHVH, and YLCK…MKVH. The segment at 375–431 is disordered; the sequence is SSLRKHMKVHESSSQGSQPSPAASSGYESSTPPTIVSPSTDNPTTSSLSPSSSAVHH. Residues 386 to 427 are compositionally biased toward low complexity; it reads SSSQGSQPSPAASSGYESSTPPTIVSPSTDNPTTSSLSPSSS.

This sequence belongs to the GLI C2H2-type zinc-finger protein family. As to quaternary structure, interacts (via the C2H2-type domains 3, 4 and 5) with MDFIC (via the C2H2-type domains 3, 4 and 5). Interacts with GLI1; the interaction enhances transcription activation. Interacts with GLI2. Interacts with GLI3; the interaction enhances transcription activation. In terms of tissue distribution, CNS. A high level expression is seen in the cerebellum. Detected in the nuclei of the cerebellar granule cell lineage from the progenitor cells of the external germinal layer to the postmigrated cells of the internal granular layer. Detected in medulloblastoma (26/29 cases), but not present in all other tumors examined.

The protein resides in the nucleus. Its subcellular location is the cytoplasm. In terms of biological role, acts as a transcriptional activator. Involved in neurogenesis. Plays important roles in the early stage of organogenesis of the CNS, as well as during dorsal spinal cord development and maturation of the cerebellum. Involved in the spatial distribution of mossy fiber (MF) neurons within the pontine gray nucleus (PGN). Plays a role in the regulation of MF axon pathway choice. Promotes MF migration towards ipsilaterally-located cerebellar territories. May have a role in shear flow mechanotransduction in osteocytes. Retains nuclear GLI1 and GLI3 in the cytoplasm. Binds to the minimal GLI-consensus sequence 5'-TGGGTGGTC-3'. This Homo sapiens (Human) protein is Zinc finger protein ZIC 1 (ZIC1).